A 119-amino-acid chain; its full sequence is Large ribosomal subunit protein bL17 (119 aa).

Belongs to the bacterial ribosomal protein bL17 family. As to quaternary structure, part of the 50S ribosomal subunit. Contacts protein L32.

In Mycoplasma mycoides subsp. mycoides SC (strain CCUG 32753 / NCTC 10114 / PG1), this protein is Large ribosomal subunit protein bL17.